Here is a 313-residue protein sequence, read N- to C-terminus: Deoxyribonucleoside regulator (313 aa).

Residues 23–42 (QQQIAEQLNISRPTVSRLLQ) constitute a DNA-binding region (H-T-H motif).

It belongs to the SorC transcriptional regulatory family. As to quaternary structure, homooctamer.

Negative regulator of the dra-nupC-pdp operon. DeoR binds cooperatively to the operator DNA, which consists of a palindrome and a direct repeat sequence located 3' to the palindrome. In Bacillus subtilis (strain 168), this protein is Deoxyribonucleoside regulator.